Here is a 426-residue protein sequence, read N- to C-terminus: Vacuole membrane protein hfl11 (426 aa).

5 helical membrane-spanning segments follow: residues 39 to 59, 73 to 93, 133 to 153, 172 to 192, and 223 to 243; these read SVVR…LSVY, IYEA…LGGE, GILQ…LTKV, IGLV…TFWV, and VLSI…YSLL. A Phosphoserine modification is found at S364. The interval 386–409 is ATG8-interacting region; that stretch reads LQFEIDDEMEPLYNQAKQMRYGDY.

It belongs to the TMEM184 family. In terms of assembly, interacts with atg8.

It is found in the vacuole membrane. Vacuole membrane protein that recruits ATG8 to facilitate the degradation of vacuolar integral membrane proteins during early-stationary vacuole turnover (EVT) when cells enter stationary phase. In Schizosaccharomyces pombe (strain 972 / ATCC 24843) (Fission yeast), this protein is Vacuole membrane protein hfl11.